Reading from the N-terminus, the 131-residue chain is Small ribosomal subunit protein uS9 (131 aa).

The tract at residues 102–131 (AGFLTRDPRMKERRKYGLKKARKAPQFSKR) is disordered. Positions 112–131 (KERRKYGLKKARKAPQFSKR) are enriched in basic residues.

The protein belongs to the universal ribosomal protein uS9 family.

In Desulfitobacterium hafniense (strain DSM 10664 / DCB-2), this protein is Small ribosomal subunit protein uS9.